A 270-amino-acid chain; its full sequence is Phosphate import ATP-binding protein PstB 2 (270 aa).

Residues 25-265 (LQAKDINIYY…PEKKQTEDYI (241 aa)) enclose the ABC transporter domain. 57–64 (GPSGCGKS) is an ATP binding site.

It belongs to the ABC transporter superfamily. Phosphate importer (TC 3.A.1.7) family. In terms of assembly, the complex is composed of two ATP-binding proteins (PstB), two transmembrane proteins (PstC and PstA) and a solute-binding protein (PstS).

Its subcellular location is the cell membrane. The enzyme catalyses phosphate(out) + ATP + H2O = ADP + 2 phosphate(in) + H(+). Functionally, part of the ABC transporter complex PstSACB involved in phosphate import. Responsible for energy coupling to the transport system. The polypeptide is Phosphate import ATP-binding protein PstB 2 (Shouchella clausii (strain KSM-K16) (Alkalihalobacillus clausii)).